Reading from the N-terminus, the 359-residue chain is Acidic skeletal organic matrix protein (359 aa).

The signal sequence occupies residues Met1 to Ser26. 2 disordered regions span residues Phe60 to Asp83 and Ser224 to Glu254. The stretch at Asp66–Ser89 forms a coiled coil.

Component of the acid-insoluble and acid-soluble organic matrix of the aragonitic skeleton (at protein level).

The protein localises to the secreted. In Acropora millepora (Staghorn coral), this protein is Acidic skeletal organic matrix protein.